A 66-amino-acid polypeptide reads, in one-letter code: MAIVPKRKTSKQRKHKRNTHSALDAQNLVTCKNCTSMIEQHVTCYRCGFYKGKKVAGYTCLNDRVQ.

Over residues 1-19 the composition is skewed to basic residues; that stretch reads MAIVPKRKTSKQRKHKRNT. The segment at 1–21 is disordered; the sequence is MAIVPKRKTSKQRKHKRNTHS.

This sequence belongs to the bacterial ribosomal protein bL32 family.

This chain is Large ribosomal subunit protein bL32, found in Mycoplasmopsis synoviae (strain 53) (Mycoplasma synoviae).